The chain runs to 459 residues: Probable acetate kinase (459 aa).

Residue asparagine 9 participates in Mg(2+) binding. Lysine 16 contacts ATP. Position 100 (arginine 100) interacts with substrate. Aspartate 156 acts as the Proton donor/acceptor in catalysis. ATP-binding positions include 216–220 (HLGSG) and 299–301 (DFR). The tract at residues 308–338 (TTTSSPTPSPNPNPNPNPDPNPDPNPDPQNQ) is disordered. Positions 314–334 (TPSPNPNPNPNPDPNPDPNPD) are enriched in pro residues. Glutamate 441 is a binding site for Mg(2+).

Belongs to the acetokinase family. It depends on Mg(2+) as a cofactor.

The catalysed reaction is acetate + ATP = acetyl phosphate + ADP. Its pathway is metabolic intermediate biosynthesis; acetyl-CoA biosynthesis; acetyl-CoA from acetate: step 1/2. The chain is Probable acetate kinase from Chaetomium globosum (strain ATCC 6205 / CBS 148.51 / DSM 1962 / NBRC 6347 / NRRL 1970) (Soil fungus).